A 135-amino-acid polypeptide reads, in one-letter code: UPF0355 protein SACOL0457 (135 aa).

Belongs to the UPF0355 family.

The polypeptide is UPF0355 protein SACOL0457 (Staphylococcus aureus (strain COL)).